The chain runs to 459 residues: Cyclooctatin synthase (459 aa).

Heme is bound at residue Cys408.

It belongs to the cytochrome P450 family. Requires heme as cofactor.

The enzyme catalyses cyclooctat-9-ene-5,7-diol + AH2 + O2 = cyclooctatin + A + H2O. Its function is as follows. Involved in the biosynthesis of cyclooctatin, a potent inhibitor of lysophospholipase. Catalyzes the hydroxylation of cyclooctat-9-ene-5,7-diol at C-18 to yield the final product, cyclooctatin. This Streptomyces melanosporofaciens protein is Cyclooctatin synthase.